A 388-amino-acid polypeptide reads, in one-letter code: Succinate--CoA ligase [ADP-forming] subunit beta (388 aa).

The 236-residue stretch at 9-244 (KQLFAEYGLP…PSQDDAREAH (236 aa)) folds into the ATP-grasp domain. ATP contacts are provided by residues Lys46, 53–55 (GRG), Glu99, Thr102, and Glu107. Asn199 and Asp213 together coordinate Mg(2+). Residues Asn264 and 321–323 (GIV) contribute to the substrate site.

The protein belongs to the succinate/malate CoA ligase beta subunit family. As to quaternary structure, heterotetramer of two alpha and two beta subunits. The cofactor is Mg(2+).

It catalyses the reaction succinate + ATP + CoA = succinyl-CoA + ADP + phosphate. The enzyme catalyses GTP + succinate + CoA = succinyl-CoA + GDP + phosphate. It functions in the pathway carbohydrate metabolism; tricarboxylic acid cycle; succinate from succinyl-CoA (ligase route): step 1/1. Its function is as follows. Succinyl-CoA synthetase functions in the citric acid cycle (TCA), coupling the hydrolysis of succinyl-CoA to the synthesis of either ATP or GTP and thus represents the only step of substrate-level phosphorylation in the TCA. The beta subunit provides nucleotide specificity of the enzyme and binds the substrate succinate, while the binding sites for coenzyme A and phosphate are found in the alpha subunit. The protein is Succinate--CoA ligase [ADP-forming] subunit beta of Pseudomonas aeruginosa (strain LESB58).